We begin with the raw amino-acid sequence, 318 residues long: NLP effector protein 9 (318 aa).

Residues methionine 1–alanine 19 form the signal peptide. Positions threonine 24–proline 35 are enriched in low complexity. Disordered regions lie at residues threonine 24–tyrosine 43 and leucine 50–threonine 93. Polar residues predominate over residues proline 55 to proline 65. Asparagine 60 carries an N-linked (GlcNAc...) asparagine glycan. A compositionally biased stretch (pro residues) spans proline 73–threonine 93. A Conserved undecapeptide motif I motif is present at residues alanine 185–aspartate 195. The Hepta-peptide GHRHDWE motif II signature appears at glycine 202–glutamate 208.

Belongs to the Necrosis inducing protein (NPP1) family.

The protein resides in the secreted. Its function is as follows. Secreted effector that contributes to virulence during infection by P.capsici. Induces distinct chlorosis at 3 days after inoculation of host C.annuum leaves, and all the chlorotic areas gradually turn brown and become moderately necrotic at 7 days after inoculation. Caused only small necrotic areas at 7 days after non-host N.benthamiana leaves infection. This is NLP effector protein 9 from Phytophthora capsici.